A 290-amino-acid chain; its full sequence is Protein ORF27 (290 aa).

This Human herpesvirus 8 type P (isolate GK18) (HHV-8) protein is Protein ORF27 (ORF27).